Here is a 156-residue protein sequence, read N- to C-terminus: Small ribosomal subunit protein uS7 (156 aa).

It belongs to the universal ribosomal protein uS7 family. In terms of assembly, part of the 30S ribosomal subunit. Contacts proteins S9 and S11.

Its function is as follows. One of the primary rRNA binding proteins, it binds directly to 16S rRNA where it nucleates assembly of the head domain of the 30S subunit. Is located at the subunit interface close to the decoding center, probably blocks exit of the E-site tRNA. The sequence is that of Small ribosomal subunit protein uS7 from Beutenbergia cavernae (strain ATCC BAA-8 / DSM 12333 / CCUG 43141 / JCM 11478 / NBRC 16432 / NCIMB 13614 / HKI 0122).